We begin with the raw amino-acid sequence, 444 residues long: Structure-specific endonuclease subunit SLX1 (444 aa).

In terms of domain architecture, GIY-YIG spans 23-105; sequence AFSCCYLLRS…QNTKVSRHAD (83 aa). An SLX1-type zinc finger spans residues 240 to 295; the sequence is CGVCKQRLILQHDIIAVCSHSSCHCAAHLSCLSSHFLKDKDSDSELVPREGTCPTC. A disordered region spans residues 324 to 354; that stretch reads RRQRAGTPKGQGLKSVRGRGHSEDENESDAL.

The protein belongs to the SLX1 family. In terms of assembly, forms a heterodimer with SLX4. The cofactor is a divalent metal cation.

The protein localises to the nucleus. Its function is as follows. Catalytic subunit of the SLX1-SLX4 structure-specific endonuclease that resolves DNA secondary structures generated during DNA repair and recombination. Has endonuclease activity towards branched DNA substrates, introducing single-strand cuts in duplex DNA close to junctions with ss-DNA. The sequence is that of Structure-specific endonuclease subunit SLX1 from Paracoccidioides lutzii (strain ATCC MYA-826 / Pb01) (Paracoccidioides brasiliensis).